Reading from the N-terminus, the 132-residue chain is Small ribosomal subunit protein eS24 (132 aa).

A compositionally biased stretch (basic and acidic residues) spans 92–101; the sequence is LARHGLYEKK. The tract at residues 92–132 is disordered; the sequence is LARHGLYEKKRPTRKQRKERKNRMKKVRGTKKSKVGAAAKK. The segment covering 102-132 has biased composition (basic residues); that stretch reads RPTRKQRKERKNRMKKVRGTKKSKVGAAAKK.

The protein belongs to the eukaryotic ribosomal protein eS24 family.

This is Small ribosomal subunit protein eS24 (RpS24) from Spodoptera frugiperda (Fall armyworm).